The chain runs to 499 residues: Potassium voltage-gated channel subfamily A member 2 (499 aa).

The interval 1-26 (MTVATGDPADEAAALPGHPQDTYDPE) is disordered. The segment at 1-125 (MTVATGDPAD…YELGEEAMEM (125 aa)) is tetramerization domain. The Cytoplasmic portion of the chain corresponds to 1-160 (MTVATGDPAD…LLFEYPESSG (160 aa)). Residues 161–182 (PARIIAIVSVMVILISIVSFCL) traverse the membrane as a helical segment. At 183 to 221 (ETLPIFRDENEDMHGSGVTFHTYSNSTIGYQQSTSFTDP) the chain is on the extracellular side. Residue Asn207 is glycosylated (N-linked (GlcNAc...) asparagine). Residues 222-243 (FFIVETLCIIWFSFEFLVRFFA) form a helical membrane-spanning segment. Residue Cys244 is the site of S-palmitoyl cysteine attachment. Over 244–254 (CPSKAGFFTNI) the chain is Cytoplasmic. A helical transmembrane segment spans residues 255-275 (MNIIDIVAIIPYFITLGTELA). Over 276–289 (EKPEDAQQGQQAMS) the chain is Extracellular. A helical; Voltage-sensor transmembrane segment spans residues 290–310 (LAILRVIRLVRVFRIFKLSRH). Over 311 to 325 (SKGLQILGQTLKASM) the chain is Cytoplasmic. The interval 312 to 325 (KGLQILGQTLKASM) is S4-S5 linker. A helical membrane pass occupies residues 326–347 (RELGLLIFFLFIGVILFSSAVY). The Extracellular portion of the chain corresponds to 348–361 (FAEADERESQFPSI). Residues 362-373 (PDAFWWAVVSMT) constitute an intramembrane region (helical). Residues 374 to 379 (TVGYGD) carry the Selectivity filter motif. The stretch at 374–381 (TVGYGDMV) is an intramembrane region. Topologically, residues 382–388 (PTTIGGK) are extracellular. The helical transmembrane segment at 389–417 (IVGSLCAIAGVLTIALPVPVIVSNFNYFY) threads the bilayer. Topologically, residues 418–499 (HRETEGEEQA…VNITKMLTDV (82 aa)) are cytoplasmic. Position 429 is a phosphotyrosine (Tyr429). 4 positions are modified to phosphoserine: Ser434, Ser440, Ser441, and Ser449. A Phosphotyrosine modification is found at Tyr458. At Ser468 the chain carries Phosphoserine. A PDZ-binding motif is present at residues 497-499 (TDV).

This sequence belongs to the potassium channel family. A (Shaker) (TC 1.A.1.2) subfamily. Kv1.2/KCNA2 sub-subfamily. As to quaternary structure, homotetramer and heterotetramer with other channel-forming alpha subunits, such as KCNA1, KCNA4, KCNA5, KCNA6 and KCNA7. Channel activity is regulated by interaction with the beta subunits, including KCNAB1 and KCNAB2. Identified in a complex with KCNA1 and KCNAB2. Identified in a complex with KCNA5 and KCNAB1. Identified in a complex with KCNA4 and FYN. Interacts with the beta subunit KCNAB1. Interacts with PTK2B. Interacts (via C-terminus) with CTTN. Interacts (via N-terminal cytoplasmic domain) with RHOA (GTP-bound form); this regulates channel activity by reducing location at the cell surface in response to CHRM1 activation. Interacts with DRD2. Interacts with SIGMAR1; cocaine consumption leads to increased interaction. Interacts with ADAM22. Interacts (via C-terminus) with the PDZ domains of DLG1, DLG2 and DLG4. Interacts with CNTNAP2. Interacts with ADAM11. Interacts with LYNX1. In terms of processing, phosphorylated on tyrosine residues; phosphorylation increases in response to ischemia. Phosphorylated on tyrosine residues by activated PTK2B/PYK2. Phosphorylation on tyrosine residues suppresses ion channel activity. Phosphorylated on tyrosine residues in response to CHRM1 activation; this abolishes interaction with CTTN. This is probably due to endocytosis of the phosphorylated channel subunits. Phosphorylated on serine residues in response to increased cAMP levels; phosphorylation is apparently not catalyzed by PKA. N-glycosylated, with complex, sialylated N-glycans. In terms of tissue distribution, detected in brain cortex. Detected in peroneal nerve in the juxtaparanodal regions of the node of Ranvier; expression is decreased in patients with diabetes mellitus that suffer from axonal neuropathy. Detected in paranodal and juxtanodal zones in myelinated spinal cord (at protein level).

It localises to the cell membrane. It is found in the membrane. Its subcellular location is the cell projection. The protein localises to the axon. The protein resides in the synapse. It localises to the endoplasmic reticulum membrane. It is found in the lamellipodium membrane. Its subcellular location is the synaptosome. The protein localises to the presynaptic cell membrane. The protein resides in the dendrite. It localises to the cell junction. It is found in the paranodal septate junction. The enzyme catalyses K(+)(in) = K(+)(out). Its activity is regulated as follows. Inhibited by 4-aminopyridine (4-AP) and charybdotoxin (CTX), but not by tetraethylammonium (TEA). Inhibited by dendrotoxin (DTX). Inhibited by tityustoxin-K alpha (TsTX-Kalpha), a toxin that is highly specific for KCNA2. Inhibited by maurotoxin. Inhibited by kappaM conotoxins kappaM-RIIIJ and kappaM-RIIIK; kappaM-RIIIJ has much higher affinity for channels containing KCNA2 than kappaM-RIIIK, with the exception of heterodimers formed by KCNA2 and KCNA7 where the opposite is true. Its function is as follows. Voltage-gated potassium channel that mediates transmembrane potassium transport in excitable membranes, primarily in the brain and the central nervous system, but also in the cardiovascular system. Prevents aberrant action potential firing and regulates neuronal output. Forms tetrameric potassium-selective channels through which potassium ions pass in accordance with their electrochemical gradient. The channel alternates between opened and closed conformations in response to the voltage difference across the membrane. Can form functional homotetrameric channels and heterotetrameric channels that contain variable proportions of KCNA1, KCNA2, KCNA4, KCNA5, KCNA6, KCNA7, and possibly other family members as well; channel properties depend on the type of alpha subunits that are part of the channel. Channel properties are modulated by cytoplasmic beta subunits that regulate the subcellular location of the alpha subunits and promote rapid inactivation of delayed rectifier potassium channels. In vivo, membranes probably contain a mixture of heteromeric potassium channel complexes, making it difficult to assign currents observed in intact tissues to any particular potassium channel family member. Homotetrameric KCNA2 forms a delayed-rectifier potassium channel that opens in response to membrane depolarization, followed by slow spontaneous channel closure. In contrast, a heteromultimer formed by KCNA2 and KCNA4 shows rapid inactivation. Regulates neuronal excitability and plays a role as pacemaker in the regulation of neuronal action potentials. KCNA2-containing channels play a presynaptic role and prevent hyperexcitability and aberrant action potential firing. Response to toxins that are selective for KCNA2-containing potassium channels suggests that in Purkinje cells, dendritic subthreshold KCNA2-containing potassium channels prevent random spontaneous calcium spikes, suppressing dendritic hyperexcitability without hindering the generation of somatic action potentials, and thereby play an important role in motor coordination. Plays a role in the induction of long-term potentiation of neuron excitability in the CA3 layer of the hippocampus. May function as down-stream effector for G protein-coupled receptors and inhibit GABAergic inputs to basolateral amygdala neurons. May contribute to the regulation of neurotransmitter release, such as gamma-aminobutyric acid (GABA). Contributes to the regulation of the axonal release of the neurotransmitter dopamine. Reduced KCNA2 expression plays a role in the perception of neuropathic pain after peripheral nerve injury, but not acute pain. Plays a role in the regulation of the time spent in non-rapid eye movement (NREM) sleep. This chain is Potassium voltage-gated channel subfamily A member 2 (KCNA2), found in Homo sapiens (Human).